Reading from the N-terminus, the 114-residue chain is Tyrosine-protein phosphatase 27 (114 aa).

Residues 1-114 (WQMIVEHKCC…ELGNDNPIVV (114 aa)) form the Tyrosine-protein phosphatase domain. Aspartate 82 contributes to the substrate binding site.

The protein belongs to the protein-tyrosine phosphatase family.

It carries out the reaction O-phospho-L-tyrosyl-[protein] + H2O = L-tyrosyl-[protein] + phosphate. This is Tyrosine-protein phosphatase 27 (STY-27) from Styela plicata (Wrinkled sea squirt).